A 431-amino-acid polypeptide reads, in one-letter code: Gamma-glutamyl phosphate reductase (431 aa).

The protein belongs to the gamma-glutamyl phosphate reductase family.

It is found in the cytoplasm. The catalysed reaction is L-glutamate 5-semialdehyde + phosphate + NADP(+) = L-glutamyl 5-phosphate + NADPH + H(+). It functions in the pathway amino-acid biosynthesis; L-proline biosynthesis; L-glutamate 5-semialdehyde from L-glutamate: step 2/2. Its function is as follows. Catalyzes the NADPH-dependent reduction of L-glutamate 5-phosphate into L-glutamate 5-semialdehyde and phosphate. The product spontaneously undergoes cyclization to form 1-pyrroline-5-carboxylate. This is Gamma-glutamyl phosphate reductase from Trichodesmium erythraeum (strain IMS101).